The sequence spans 118 residues: Putative pterin-4-alpha-carbinolamine dehydratase (118 aa).

The protein belongs to the pterin-4-alpha-carbinolamine dehydratase family.

The catalysed reaction is (4aS,6R)-4a-hydroxy-L-erythro-5,6,7,8-tetrahydrobiopterin = (6R)-L-erythro-6,7-dihydrobiopterin + H2O. The chain is Putative pterin-4-alpha-carbinolamine dehydratase from Xanthomonas oryzae pv. oryzae (strain MAFF 311018).